Reading from the N-terminus, the 151-residue chain is Alpha-latroinsectotoxin-Lh1a (151 aa).

ANK repeat units follow at residues 21–37, 41–52, 56–80, 84–104, 105–116, 117–125, 126–146, and 147–151; these read TDVT…DLNA, ILIRNTNAVINI, VGLT…YLND, NGMT…VDFL, KWTPLHLAILFK, QLVIELLAK, TFFD…AVEK, and YIAAR.

It belongs to the cationic peptide 01 (latrotoxin) family. 02 (alpha-latroinsectotoxin) subfamily. In terms of assembly, homotetramer in membranes. In terms of tissue distribution, expressed by the venom gland.

The protein localises to the secreted. It is found in the target cell membrane. Insecticidal presynaptic neurotoxin that induces massive neurotransmitter release at insect (but not vertebrate) neuromuscular junctions. Native toxin forms cation-permeable pores (with high permeability to calcium) in lipid membranes locust muscle membrane and artificial lipid bilayers. May bind to insect neurexin-1 homolog, insect adhesion G protein-coupled receptor L1 homolog, and insect receptor-type tyrosine-protein phosphatase S homolog, and induces neurotransmitter exocytosis both by forming tetrameric pores in membranes and signaling via G protein-coupled receptor. Oligomerization is a process independent of divalent cations. The toxin forms channels with 0.55-0.58 nm entrance diameter and a relatively small conductance in planar phospholipid membranes. The sequence is that of Alpha-latroinsectotoxin-Lh1a from Latrodectus hasselti (Redback spider).